A 456-amino-acid polypeptide reads, in one-letter code: N(6)-adenosine-methyltransferase non-catalytic subunit METTL14 (456 aa).

Positions 45–76 are disordered; that stretch reads AETRETCRASYDTSAPNAKRKYQDEGETDEDK. Interaction with METTL3 regions lie at residues 135–136 and 237–238; these read RD and SG. A positively charged region required for RNA-binding region spans residues 245–254; it reads RVCLRKWGYR. Interaction with METTL3 stretches follow at residues 255-258 and 278-287; these read RCED and KAVFQRTKEH. The segment at 297-298 is positively charged region required for RNA-binding; that stretch reads KR. The tract at residues 308-312 is interaction with METTL3; sequence NVDID. The disordered stretch occupies residues 393–456; the sequence is ERLRPKSPPP…GAHRGGFPPR (64 aa). Ser399 bears the Phosphoserine mark. Positions 409 to 423 are enriched in gly residues; sequence GGGAPRGGGRGGTSA. A compositionally biased stretch (basic and acidic residues) spans 425-440; it reads RGRERNRSNFRGERGG. Positions 441 to 450 are enriched in gly residues; the sequence is FRGGRGGAHR.

It belongs to the MT-A70-like family. As to quaternary structure, heterodimer; heterodimerizes with METTL3 to form an antiparallel heterodimer that constitutes an active methyltransferase. Component of the WMM complex, a N6-methyltransferase complex composed of a catalytic subcomplex, named MAC, and of an associated subcomplex, named MACOM. The MAC subcomplex is composed of METTL3 and METTL14. The MACOM subcomplex is composed of WTAP, ZC3H13, CBLL1/HAKAI, VIRMA, and, in some cases of RBM15 (RBM15 or RBM15B).

It is found in the nucleus. The METTL3-METTL14 heterodimer forms a N6-methyltransferase complex that methylates adenosine residues at the N(6) position of some mRNAs and regulates the circadian clock, differentiation of embryonic stem cells and cortical neurogenesis. In the heterodimer formed with METTL3, METTL14 constitutes the RNA-binding scaffold that recognizes the substrate rather than the catalytic core. N6-methyladenosine (m6A), which takes place at the 5'-[AG]GAC-3' consensus sites of some mRNAs, plays a role in mRNA stability and processing. M6A acts as a key regulator of mRNA stability by promoting mRNA destabilization and degradation. In embryonic stem cells (ESCs), m6A methylation of mRNAs encoding key naive pluripotency-promoting transcripts results in transcript destabilization. M6A regulates spermatogonial differentiation and meiosis and is essential for male fertility and spermatogenesis. M6A also regulates cortical neurogenesis: m6A methylation of transcripts related to transcription factors, neural stem cells, the cell cycle and neuronal differentiation during brain development promotes their destabilization and decay, promoting differentiation of radial glial cells. This Bos taurus (Bovine) protein is N(6)-adenosine-methyltransferase non-catalytic subunit METTL14 (METTL14).